Consider the following 268-residue polypeptide: FKBP-type peptidyl-prolyl cis-trans isomerase FkpA (268 aa).

Residues Met-1–Ala-20 form the signal peptide. The 86-residue stretch at Thr-172–Glu-257 folds into the PPIase FKBP-type domain.

This sequence belongs to the FKBP-type PPIase family.

The protein resides in the periplasm. It carries out the reaction [protein]-peptidylproline (omega=180) = [protein]-peptidylproline (omega=0). PPIases accelerate the folding of proteins. It catalyzes the cis-trans isomerization of proline imidic peptide bonds in oligopeptides. FkpA probably acts in the folding of extracytoplasmic proteins. The sequence is that of FKBP-type peptidyl-prolyl cis-trans isomerase FkpA (fkpA) from Aeromonas hydrophila.